A 348-amino-acid chain; its full sequence is Probable purine nucleoside permease C285.05 (348 aa).

The N-terminal stretch at 1–21 (MLFLKLVASVLALMTIVPAQA) is a signal peptide.

The protein belongs to the NUP family.

The protein localises to the endoplasmic reticulum. Probable nucleoside permease that transports adenosine and guanosine. The polypeptide is Probable purine nucleoside permease C285.05 (Schizosaccharomyces pombe (strain 972 / ATCC 24843) (Fission yeast)).